A 386-amino-acid chain; its full sequence is Uroporphyrinogen decarboxylase (386 aa).

Coproporphyrinogen I contacts are provided by Arg44, Ala46, Arg48, Arg57, Asp93, Tyr170, Ser225, and His364. Arg44, Ala46, and Arg48 together coordinate coproporphyrinogen III. 4 residues coordinate coproporphyrinogen III: Asp93, Tyr170, Ser225, and His364.

It belongs to the uroporphyrinogen decarboxylase family. As to quaternary structure, homodimer.

The protein localises to the cytoplasm. The protein resides in the cytosol. It carries out the reaction uroporphyrinogen III + 4 H(+) = coproporphyrinogen III + 4 CO2. It functions in the pathway porphyrin-containing compound metabolism; protoporphyrin-IX biosynthesis; coproporphyrinogen-III from 5-aminolevulinate: step 4/4. Catalyzes the decarboxylation of four acetate groups of uroporphyrinogen-III to yield coproporphyrinogen-III. This chain is Uroporphyrinogen decarboxylase, found in Drosophila virilis (Fruit fly).